The following is a 472-amino-acid chain: Threonine synthase-like 2 (472 aa).

Lysine 113 bears the N6-(pyridoxal phosphate)lysine mark.

Belongs to the threonine synthase family. Pyridoxal 5'-phosphate is required as a cofactor.

In terms of biological role, acts as a catabolic phospho-lyase on both gamma- and beta-phosphorylated substrates. Degrades O-phospho-threonine (PThr) to alpha-ketobutyrate, ammonia and phosphate. The chain is Threonine synthase-like 2 (thnsl2) from Xenopus laevis (African clawed frog).